Consider the following 253-residue polypeptide: Imidazole glycerol phosphate synthase subunit HisF (253 aa).

Residues Asp-11 and Asp-130 contribute to the active site.

It belongs to the HisA/HisF family. As to quaternary structure, heterodimer of HisH and HisF.

It is found in the cytoplasm. It catalyses the reaction 5-[(5-phospho-1-deoxy-D-ribulos-1-ylimino)methylamino]-1-(5-phospho-beta-D-ribosyl)imidazole-4-carboxamide + L-glutamine = D-erythro-1-(imidazol-4-yl)glycerol 3-phosphate + 5-amino-1-(5-phospho-beta-D-ribosyl)imidazole-4-carboxamide + L-glutamate + H(+). Its pathway is amino-acid biosynthesis; L-histidine biosynthesis; L-histidine from 5-phospho-alpha-D-ribose 1-diphosphate: step 5/9. Its function is as follows. IGPS catalyzes the conversion of PRFAR and glutamine to IGP, AICAR and glutamate. The HisF subunit catalyzes the cyclization activity that produces IGP and AICAR from PRFAR using the ammonia provided by the HisH subunit. In Clostridium botulinum (strain 657 / Type Ba4), this protein is Imidazole glycerol phosphate synthase subunit HisF.